Consider the following 117-residue polypeptide: Large ribosomal subunit protein uL18 (117 aa).

Belongs to the universal ribosomal protein uL18 family. Part of the 50S ribosomal subunit; part of the 5S rRNA/L5/L18/L25 subcomplex. Contacts the 5S and 23S rRNAs.

Its function is as follows. This is one of the proteins that bind and probably mediate the attachment of the 5S RNA into the large ribosomal subunit, where it forms part of the central protuberance. This chain is Large ribosomal subunit protein uL18, found in Alkalilimnicola ehrlichii (strain ATCC BAA-1101 / DSM 17681 / MLHE-1).